A 750-amino-acid chain; its full sequence is Photosystem I P700 chlorophyll a apoprotein A1 (750 aa).

8 helical membrane passes run 70 to 93 (VFSA…FHGA), 156 to 179 (LYCT…FHYH), 195 to 219 (LNHH…HVSL), 291 to 309 (TAHH…GHMY), 346 to 369 (WHAQ…HHMY), 385 to 411 (LSLF…IFMV), 433 to 455 (AIIS…LYIH), and 531 to 549 (FLVH…LILL). 2 residues coordinate [4Fe-4S] cluster: Cys-573 and Cys-582. The next 2 helical transmembrane spans lie at 589–610 (HVFL…HFSW) and 664–686 (LSAY…MFLF). His-675 provides a ligand contact to chlorophyll a'. Chlorophyll a-binding residues include Met-683 and Tyr-691. Trp-692 provides a ligand contact to phylloquinone. The chain crosses the membrane as a helical span at residues 724-744 (AVGVTHYLLGGIATTWAFFLA).

It belongs to the PsaA/PsaB family. As to quaternary structure, the PsaA/B heterodimer binds the P700 chlorophyll special pair and subsequent electron acceptors. PSI consists of a core antenna complex that captures photons, and an electron transfer chain that converts photonic excitation into a charge separation. The eukaryotic PSI reaction center is composed of at least 11 subunits. The cofactor is P700 is a chlorophyll a/chlorophyll a' dimer, A0 is one or more chlorophyll a, A1 is one or both phylloquinones and FX is a shared 4Fe-4S iron-sulfur center..

The protein resides in the plastid. It localises to the chloroplast thylakoid membrane. It catalyses the reaction reduced [plastocyanin] + hnu + oxidized [2Fe-2S]-[ferredoxin] = oxidized [plastocyanin] + reduced [2Fe-2S]-[ferredoxin]. Its function is as follows. PsaA and PsaB bind P700, the primary electron donor of photosystem I (PSI), as well as the electron acceptors A0, A1 and FX. PSI is a plastocyanin-ferredoxin oxidoreductase, converting photonic excitation into a charge separation, which transfers an electron from the donor P700 chlorophyll pair to the spectroscopically characterized acceptors A0, A1, FX, FA and FB in turn. Oxidized P700 is reduced on the lumenal side of the thylakoid membrane by plastocyanin. The chain is Photosystem I P700 chlorophyll a apoprotein A1 from Helianthus annuus (Common sunflower).